A 79-amino-acid chain; its full sequence is Conotoxin Tr6.2 (79 aa).

The first 22 residues, 1–22 (MKLTCVLIISVLFLTASQLITA), serve as a signal peptide directing secretion. Residues 23–47 (VYSRDKQQYRAARLRDEMRNLKGAR) constitute a propeptide that is removed on maturation. 3 cysteine pairs are disulfide-bonded: Cys49–Cys62, Cys56–Cys67, and Cys61–Cys77. Residues Pro60 and Pro63 each carry the 4-hydroxyproline modification.

Belongs to the conotoxin O1 superfamily. In terms of tissue distribution, expressed by the venom duct.

The protein localises to the secreted. Functionally, ion channel inhibitor that inhibits the increase in intracellular calcium upon depolarization in DRG neurons. In vivo, both intraperitoneal and intracranial injections into mice induce hyperactivity. This Conus terebra (Sea snail) protein is Conotoxin Tr6.2.